A 429-amino-acid polypeptide reads, in one-letter code: Asparagine--tRNA ligase (429 aa).

This sequence belongs to the class-II aminoacyl-tRNA synthetase family. As to quaternary structure, homodimer.

It localises to the cytoplasm. The enzyme catalyses tRNA(Asn) + L-asparagine + ATP = L-asparaginyl-tRNA(Asn) + AMP + diphosphate + H(+). The polypeptide is Asparagine--tRNA ligase (Desulforamulus reducens (strain ATCC BAA-1160 / DSM 100696 / MI-1) (Desulfotomaculum reducens)).